The primary structure comprises 554 residues: Apyrase (554 aa).

Positions 1–21 (MFKITVFIYVLQLILPSKVHS) are cleaved as a signal peptide. Asp-43, His-45, Asp-92, Asn-124, His-224, and His-248 together coordinate a divalent metal cation. The AMP site is built by Arg-358, Asn-394, Arg-399, Phe-418, Phe-504, and Asp-510.

The protein belongs to the 5'-nucleotidase family. A divalent metal cation is required as a cofactor. In terms of tissue distribution, salivary gland (at protein level).

The protein localises to the secreted. It catalyses the reaction a ribonucleoside 5'-triphosphate + 2 H2O = a ribonucleoside 5'-phosphate + 2 phosphate + 2 H(+). In terms of biological role, facilitates hematophagy by inhibiting ADP-dependent platelet aggregation in the host. Cleaves adenosine triphosphate (ATP) and adenosine diphosphate (ADP) to adenosine monophosphate (AMP) and inorganic phosphate. Shows potential for antithrombotic activity. Can induce basophil activation. May reduce probing time by facilitating the speed of locating blood. In Tabanus yao (Horsefly), this protein is Apyrase.